Reading from the N-terminus, the 283-residue chain is Peroxisomal protein 2 (283 aa).

Residues 281–283 carry the Peroxisomal target signal 1 (PTS1) motif; it reads VKL.

Belongs to the PXP2 family.

It localises to the peroxisome matrix. The protein resides in the cytoplasm. The protein localises to the cytosol. In terms of biological role, probably involved in peroxisome formation or maintenance as well as in amino acid metabolism. The sequence is that of Peroxisomal protein 2 from Saccharomyces cerevisiae (strain ATCC 204508 / S288c) (Baker's yeast).